The chain runs to 357 residues: 3-isopropylmalate dehydrogenase (357 aa).

Substrate-binding residues include R97, R107, R135, and D224. Residues D224, D248, and D252 each coordinate Mg(2+). Position 282–294 (282–294 (GSAPDIAGKNIAN)) interacts with NAD(+).

The protein belongs to the isocitrate and isopropylmalate dehydrogenases family. LeuB type 1 subfamily. Homodimer. It depends on Mg(2+) as a cofactor. Requires Mn(2+) as cofactor.

The protein localises to the cytoplasm. It catalyses the reaction (2R,3S)-3-isopropylmalate + NAD(+) = 4-methyl-2-oxopentanoate + CO2 + NADH. It functions in the pathway amino-acid biosynthesis; L-leucine biosynthesis; L-leucine from 3-methyl-2-oxobutanoate: step 3/4. Functionally, catalyzes the oxidation of 3-carboxy-2-hydroxy-4-methylpentanoate (3-isopropylmalate) to 3-carboxy-4-methyl-2-oxopentanoate. The product decarboxylates to 4-methyl-2 oxopentanoate. This is 3-isopropylmalate dehydrogenase from Prochlorococcus marinus (strain MIT 9312).